The chain runs to 690 residues: Methionine--tRNA ligase (690 aa).

Residues 20 to 30 carry the 'HIGH' region motif; it reads PYANGSIHLGH. 4 residues coordinate Zn(2+): cysteine 151, cysteine 154, cysteine 164, and cysteine 167. The 'KMSKS' region motif lies at 337 to 341; it reads KMSKS. Lysine 340 contacts ATP. The region spanning 589–690 is the tRNA-binding domain; that stretch reads DFAKVDLRIA…EGAQPGMRVM (102 aa).

It belongs to the class-I aminoacyl-tRNA synthetase family. MetG type 1 subfamily. As to quaternary structure, homodimer. The cofactor is Zn(2+).

Its subcellular location is the cytoplasm. The catalysed reaction is tRNA(Met) + L-methionine + ATP = L-methionyl-tRNA(Met) + AMP + diphosphate. Functionally, is required not only for elongation of protein synthesis but also for the initiation of all mRNA translation through initiator tRNA(fMet) aminoacylation. This chain is Methionine--tRNA ligase, found in Vibrio vulnificus (strain YJ016).